Reading from the N-terminus, the 316-residue chain is UPF0725 protein At1g02770 (316 aa).

It belongs to the UPF0725 (EMB2204) family.

The sequence is that of UPF0725 protein At1g02770 from Arabidopsis thaliana (Mouse-ear cress).